A 344-amino-acid polypeptide reads, in one-letter code: Dihydroorotase (344 aa).

Zn(2+) is bound by residues His13 and His15. Substrate-binding positions include His15 to Arg17 and Asn41. Zn(2+) is bound by residues Lys98, His135, and His173. Lys98 bears the N6-carboxylysine mark. His135 provides a ligand contact to substrate. Residue Leu218 participates in substrate binding. Asp247 is a Zn(2+) binding site. Asp247 is an active-site residue. Substrate is bound by residues His251 and Ala263.

The protein belongs to the metallo-dependent hydrolases superfamily. DHOase family. Class II DHOase subfamily. As to quaternary structure, homodimer. The cofactor is Zn(2+).

The enzyme catalyses (S)-dihydroorotate + H2O = N-carbamoyl-L-aspartate + H(+). The protein operates within pyrimidine metabolism; UMP biosynthesis via de novo pathway; (S)-dihydroorotate from bicarbonate: step 3/3. Its function is as follows. Catalyzes the reversible cyclization of carbamoyl aspartate to dihydroorotate. The polypeptide is Dihydroorotase (Neisseria meningitidis serogroup C / serotype 2a (strain ATCC 700532 / DSM 15464 / FAM18)).